A 120-amino-acid chain; its full sequence is Large ribosomal subunit protein uL18 (120 aa).

The protein belongs to the universal ribosomal protein uL18 family. As to quaternary structure, part of the 50S ribosomal subunit; part of the 5S rRNA/L5/L18/L25 subcomplex. Contacts the 5S and 23S rRNAs.

In terms of biological role, this is one of the proteins that bind and probably mediate the attachment of the 5S RNA into the large ribosomal subunit, where it forms part of the central protuberance. This is Large ribosomal subunit protein uL18 from Rhizobium etli (strain CIAT 652).